Consider the following 366-residue polypeptide: 3-isopropylmalate dehydrogenase (366 aa).

78–91 provides a ligand contact to NAD(+); that stretch reads GPQWTHLKGSESPE. 4 residues coordinate substrate: Arg99, Arg109, Arg138, and Asp227. Mg(2+) contacts are provided by Asp227, Asp251, and Asp255. 285-297 serves as a coordination point for NAD(+); the sequence is GSAPDIAEKNIAN.

It belongs to the isocitrate and isopropylmalate dehydrogenases family. LeuB type 1 subfamily. In terms of assembly, homodimer. Mg(2+) is required as a cofactor. Requires Mn(2+) as cofactor.

The protein localises to the cytoplasm. The enzyme catalyses (2R,3S)-3-isopropylmalate + NAD(+) = 4-methyl-2-oxopentanoate + CO2 + NADH. It participates in amino-acid biosynthesis; L-leucine biosynthesis; L-leucine from 3-methyl-2-oxobutanoate: step 3/4. Catalyzes the oxidation of 3-carboxy-2-hydroxy-4-methylpentanoate (3-isopropylmalate) to 3-carboxy-4-methyl-2-oxopentanoate. The product decarboxylates to 4-methyl-2 oxopentanoate. The protein is 3-isopropylmalate dehydrogenase of Blochmanniella pennsylvanica (strain BPEN).